We begin with the raw amino-acid sequence, 336 residues long: Fructose-1,6-bisphosphatase class 1 (336 aa).

Mg(2+)-binding residues include Glu90, Asp112, Leu114, and Asp115. Substrate-binding positions include 115-118 (DGSS), Asn211, and Lys277. Residue Glu283 participates in Mg(2+) binding.

The protein belongs to the FBPase class 1 family. In terms of assembly, homotetramer. The cofactor is Mg(2+).

It is found in the cytoplasm. The catalysed reaction is beta-D-fructose 1,6-bisphosphate + H2O = beta-D-fructose 6-phosphate + phosphate. It participates in carbohydrate biosynthesis; gluconeogenesis. The sequence is that of Fructose-1,6-bisphosphatase class 1 from Stutzerimonas stutzeri (strain A1501) (Pseudomonas stutzeri).